The chain runs to 557 residues: Potassium-transporting ATPase potassium-binding subunit (557 aa).

Helical transmembrane passes span 5–25, 63–83, 132–152, 170–190, 253–273, 283–303, 329–349, 356–376, 379–399, 416–436, 484–504, and 526–546; these read GFLL…PLGS, LCAI…MLLG, GLTV…FAFI, LLRI…LFFI, FVQM…FGEV, LLWA…WAEV, VLVS…AVIA, ALGG…FGGV, GLYG…LMIG, LTAL…ALAM, LLAF…MAIA, and LFVG…FIPA.

This sequence belongs to the KdpA family. In terms of assembly, the system is composed of three essential subunits: KdpA, KdpB and KdpC.

It is found in the cell inner membrane. Functionally, part of the high-affinity ATP-driven potassium transport (or Kdp) system, which catalyzes the hydrolysis of ATP coupled with the electrogenic transport of potassium into the cytoplasm. This subunit binds the periplasmic potassium ions and delivers the ions to the membrane domain of KdpB through an intramembrane tunnel. The protein is Potassium-transporting ATPase potassium-binding subunit of Shigella boydii serotype 4 (strain Sb227).